Here is a 394-residue protein sequence, read N- to C-terminus: Putative transporter AraJ (394 aa).

The Cytoplasmic segment spans residues 1–4 (MKKV). The helical transmembrane segment at 5–27 (ILSLALGTFGLGMAEFGIMGVLT) threads the bilayer. Residues 28-41 (ELAHNVGISIPAAG) are Periplasmic-facing. A helical transmembrane segment spans residues 42–63 (HMISYYALGVVVGAPIIALFSS). The Cytoplasmic portion of the chain corresponds to 64-69 (RYSLKH). A helical membrane pass occupies residues 70-89 (ILLFLVALCVIGNAMFTLSS). Residues 90-93 (SYLM) lie on the Periplasmic side of the membrane. The chain crosses the membrane as a helical span at residues 94–116 (LAIGRLVSGFPHGAFFGVGAIVL). At 117 to 128 (SKIIKPGKVTAA) the chain is on the cytoplasmic side. Residues 129–151 (VAGMVSGMTVANLLGIPLGTYLS) form a helical membrane-spanning segment. At 152-155 (QEFS) the chain is on the periplasmic side. A helical membrane pass occupies residues 156 to 178 (WRYTFLLIAVFNIAVMASVYFWV). The Cytoplasmic segment spans residues 179-198 (PDIRDEAKGNLREQFHFLRS). A helical membrane pass occupies residues 199–221 (PAPWLIFAATMFGNAGVFAWFSY). Residues 222 to 235 (VKPYMMFISGFSET) are Periplasmic-facing. A helical membrane pass occupies residues 236–255 (AMTFIMMLVGLGMVLGNMLS). Topologically, residues 256 to 261 (GRISGR) are cytoplasmic. Residues 262–284 (YSPLRIAAVTDFIIVLALLMLFF) form a helical membrane-spanning segment. The Periplasmic portion of the chain corresponds to 285 to 293 (CGGMKTTSL). Residues 294–316 (IFAFICCAGLFALSAPLQILLLQ) form a helical membrane-spanning segment. At 317–322 (NAKGGE) the chain is on the cytoplasmic side. A helical membrane pass occupies residues 323-342 (LLGAAGGQIAFNLGSAVGAY). Topologically, residues 343-351 (CGGMMLTLG) are periplasmic. A helical membrane pass occupies residues 352–374 (LAYNYVALPAALLSFAAMSSLLL). Over 375-394 (YGRYKRQQAADTPVLAKPLG) the chain is Cytoplasmic.

It belongs to the major facilitator superfamily.

It localises to the cell inner membrane. Its function is as follows. May be involved in either the transport or processing of arabinose polymers. This is Putative transporter AraJ (araJ) from Escherichia coli (strain K12).